The chain runs to 275 residues: tRNA (guanine-N(7)-)-methyltransferase (275 aa).

A disordered region spans residues 1-73; it reads MRHHGRMHAR…GGQQDTWERL (73 aa). Positions 46 to 59 are enriched in basic residues; that stretch reads AHRHRRVTSFRSRR. S-adenosyl-L-methionine is bound by residues Glu-107, Glu-132, Asp-159, and Asp-182. Asp-182 is an active-site residue. Residues Lys-186, Asp-218, and 254 to 257 contribute to the substrate site; that span reads TKYE.

The protein belongs to the class I-like SAM-binding methyltransferase superfamily. TrmB family.

The catalysed reaction is guanosine(46) in tRNA + S-adenosyl-L-methionine = N(7)-methylguanosine(46) in tRNA + S-adenosyl-L-homocysteine. It functions in the pathway tRNA modification; N(7)-methylguanine-tRNA biosynthesis. Functionally, catalyzes the formation of N(7)-methylguanine at position 46 (m7G46) in tRNA. This Mycobacterium sp. (strain KMS) protein is tRNA (guanine-N(7)-)-methyltransferase.